A 775-amino-acid polypeptide reads, in one-letter code: Homoaconitase, mitochondrial (775 aa).

A mitochondrion-targeting transit peptide spans 1–29 (MQSRLMPSGGPGRRWAFLRVPSTPQRRAF). [4Fe-4S] cluster-binding residues include Cys392, Cys461, and Cys464.

This sequence belongs to the aconitase/IPM isomerase family. [4Fe-4S] cluster is required as a cofactor.

Its subcellular location is the mitochondrion. The enzyme catalyses (2R,3S)-homoisocitrate = cis-homoaconitate + H2O. The protein operates within amino-acid biosynthesis; L-lysine biosynthesis via AAA pathway; L-alpha-aminoadipate from 2-oxoglutarate: step 3/5. In terms of biological role, catalyzes the reversible hydration of cis-homoaconitate to (2R,3S)-homoisocitrate, a step in the alpha-aminoadipate pathway for lysine biosynthesis. This chain is Homoaconitase, mitochondrial (lys4), found in Aspergillus oryzae (strain ATCC 42149 / RIB 40) (Yellow koji mold).